The chain runs to 136 residues: Histone H3 (136 aa).

The tract at residues 1–43 (MARTKQTARKNVGGKAPRKHIGQKSARKTASTTAGMKKPHRYR) is disordered. N6-methylated lysine is present on Lys-10. N6-acetyllysine occurs at positions 15 and 24. Residues 16-27 (APRKHIGQKSAR) are compositionally biased toward basic residues. N6-methylated lysine occurs at positions 28 and 37.

The protein belongs to the histone H3 family. The nucleosome is a histone octamer containing two molecules each of H2A, H2B, H3 and H4 assembled in one H3-H4 heterotetramer and two H2A-H2B heterodimers. The octamer wraps approximately 147 bp of DNA.

Its subcellular location is the nucleus. It localises to the chromosome. Core component of nucleosome. Nucleosomes wrap and compact DNA into chromatin, limiting DNA accessibility to the cellular machineries which require DNA as a template. Histones thereby play a central role in transcription regulation, DNA repair, DNA replication and chromosomal stability. DNA accessibility is regulated via a complex set of post-translational modifications of histones, also called histone code, and nucleosome remodeling. In Euplotes crassus, this protein is Histone H3.